Here is a 251-residue protein sequence, read N- to C-terminus: Triosephosphate isomerase (251 aa).

A substrate-binding site is contributed by 9-11 (NWK). H95 serves as the catalytic Electrophile. The active-site Proton acceptor is the E167. Substrate-binding positions include G173, S212, and 233–234 (GG).

This sequence belongs to the triosephosphate isomerase family. Homodimer.

The protein localises to the cytoplasm. It carries out the reaction D-glyceraldehyde 3-phosphate = dihydroxyacetone phosphate. The protein operates within carbohydrate biosynthesis; gluconeogenesis. It participates in carbohydrate degradation; glycolysis; D-glyceraldehyde 3-phosphate from glycerone phosphate: step 1/1. Functionally, involved in the gluconeogenesis. Catalyzes stereospecifically the conversion of dihydroxyacetone phosphate (DHAP) to D-glyceraldehyde-3-phosphate (G3P). This chain is Triosephosphate isomerase, found in Pseudomonas putida (strain W619).